Reading from the N-terminus, the 329-residue chain is MLRVFIFFVFLGSGLAGKVKSPITCKYFISKNNTWYKYNVTILNDTIILPAYNTIPTNATGISCTCHDIDYLQKNNISIRYNTSILKTFQDIRIIRCGMKNISEIAAGFSKELKFLDLRYNDLQFIEYNILRKLIRSNTPTYLYYNNLMCGKRNCPLYYFLLKQEQTYLKLLPQFFLRRISFSNNHTYLYHFLSCGNKPGHEFLEYQTKFCRTKFPEINITVNQLIAKKNTERYKNCYPFVLVSIICSCISSLFLLICLLRTICKKYSCTKQGKTTHSYIPLIPSYTFSLKKHRHPETAVVEDHASTANSPIVYIPTTEEKKVSCSRRK.

An N-terminal signal peptide occupies residues 1-31 (MLRVFIFFVFLGSGLAGKVKSPITCKYFISK). N-linked (GlcNAc...) asparagine; by host glycosylation is found at Asn-32, Asn-39, Asn-44, Asn-58, Asn-76, Asn-82, Asn-101, Asn-185, and Asn-219. At 32–239 (NNTWYKYNVT…NTERYKNCYP (208 aa)) the chain is on the extracellular side. Residues 240–260 (FVLVSIICSCISSLFLLICLL) traverse the membrane as a helical segment. Residues 261-329 (RTICKKYSCT…EKKVSCSRRK (69 aa)) are Cytoplasmic-facing.

This sequence belongs to the asfivirus I329L family. Post-translationally, highly glycosylated.

Its subcellular location is the host endoplasmic reticulum membrane. The protein localises to the host Golgi apparatus membrane. In terms of biological role, viral TLR3 homolog that probably prevents TLR3 dimerization and subsequent induction of IFN. Inhibits dsRNA-stimulated activation of NF-kB and IRF3. This Ornithodoros (relapsing fever ticks) protein is Transmembrane protein I329L.